The sequence spans 337 residues: Eukaryotic translation initiation factor 3 subunit I (337 aa).

5 WD repeats span residues 8–47 (GHER…RLGT), 50–91 (GHQG…KVWD), 147–186 (CTES…QLEN), 191–230 (EFDH…ILKT), and 288–327 (GHFG…FDFM).

It belongs to the eIF-3 subunit I family. Component of the eukaryotic translation initiation factor 3 (eIF-3) complex.

The protein resides in the cytoplasm. Its function is as follows. Component of the eukaryotic translation initiation factor 3 (eIF-3) complex, which is involved in protein synthesis of a specialized repertoire of mRNAs and, together with other initiation factors, stimulates binding of mRNA and methionyl-tRNAi to the 40S ribosome. The eIF-3 complex specifically targets and initiates translation of a subset of mRNAs involved in cell proliferation. In Aspergillus niger (strain ATCC MYA-4892 / CBS 513.88 / FGSC A1513), this protein is Eukaryotic translation initiation factor 3 subunit I (tif34).